The sequence spans 475 residues: Aspartyl/glutamyl-tRNA(Asn/Gln) amidotransferase subunit B (475 aa).

Belongs to the GatB/GatE family. GatB subfamily. Heterotrimer of A, B and C subunits.

The enzyme catalyses L-glutamyl-tRNA(Gln) + L-glutamine + ATP + H2O = L-glutaminyl-tRNA(Gln) + L-glutamate + ADP + phosphate + H(+). The catalysed reaction is L-aspartyl-tRNA(Asn) + L-glutamine + ATP + H2O = L-asparaginyl-tRNA(Asn) + L-glutamate + ADP + phosphate + 2 H(+). Functionally, allows the formation of correctly charged Asn-tRNA(Asn) or Gln-tRNA(Gln) through the transamidation of misacylated Asp-tRNA(Asn) or Glu-tRNA(Gln) in organisms which lack either or both of asparaginyl-tRNA or glutaminyl-tRNA synthetases. The reaction takes place in the presence of glutamine and ATP through an activated phospho-Asp-tRNA(Asn) or phospho-Glu-tRNA(Gln). The protein is Aspartyl/glutamyl-tRNA(Asn/Gln) amidotransferase subunit B of Bacillus cereus (strain ATCC 10987 / NRS 248).